The chain runs to 380 residues: Hydrogenase maturation factor HypD2 (380 aa).

Positions 36, 64, and 67 each coordinate Fe cation.

The protein belongs to the HypD family. It depends on [4Fe-4S] cluster as a cofactor.

The protein operates within protein modification; [NiFe] hydrogenase maturation. Involved in the maturation of [NiFe] hydrogenases. Involved in the biosynthesis of the Fe(CN)(2)CO cofactor. The polypeptide is Hydrogenase maturation factor HypD2 (hypD2) (Bradyrhizobium diazoefficiens (strain JCM 10833 / BCRC 13528 / IAM 13628 / NBRC 14792 / USDA 110)).